Here is a 142-residue protein sequence, read N- to C-terminus: Mini-ribonuclease 3 (142 aa).

Residue Asp-33 is part of the active site.

The protein belongs to the MrnC RNase family. In terms of assembly, homodimer. The cofactor is Mg(2+).

The protein resides in the cytoplasm. Involved in correct processing of both the 5' and 3' ends of 23S rRNA precursor. Processes 30S rRNA precursor transcript even in absence of ribonuclease 3 (Rnc); Rnc processes 30S rRNA into smaller rRNA precursors. The protein is Mini-ribonuclease 3 of Thermoanaerobacter sp. (strain X514).